Reading from the N-terminus, the 180-residue chain is Ribosome rescue factor SmrB (180 aa).

Positions 98–173 (LDLHGLTQLQ…GNAALLVLVA (76 aa)) constitute a Smr domain.

This sequence belongs to the SmrB family. As to quaternary structure, associates with collided ribosomes, but not with correctly translating polysomes.

Acts as a ribosome collision sensor. Detects stalled/collided disomes (pairs of ribosomes where the leading ribosome is stalled and a second ribosome has collided with it) and endonucleolytically cleaves mRNA at the 5' boundary of the stalled ribosome. Stalled/collided disomes form a new interface (primarily via the 30S subunits) that binds SmrB. Cleaved mRNA becomes available for tmRNA ligation, leading to ribosomal subunit dissociation and rescue of stalled ribosomes. This Pectobacterium carotovorum subsp. carotovorum (strain PC1) protein is Ribosome rescue factor SmrB.